A 189-amino-acid chain; its full sequence is Small ribosomal subunit protein uS4 (189 aa).

Residues 107–181 (RRLQTQVFKL…VKRRTLRKGD (75 aa)) enclose the S4 RNA-binding domain. Residues 161–189 (QSPYGGGRPGRVKRRTLRKGDGAGGDDEE) form a disordered region.

This sequence belongs to the universal ribosomal protein uS4 family. Component of the small ribosomal subunit. Part of the small subunit (SSU) processome, composed of more than 70 proteins and the RNA chaperone small nucleolar RNA (snoRNA) U3.

It is found in the cytoplasm. The protein localises to the nucleus. Its subcellular location is the nucleolus. Functionally, component of the small ribosomal subunit. The ribosome is a large ribonucleoprotein complex responsible for the synthesis of proteins in the cell. Part of the small subunit (SSU) processome, first precursor of the small eukaryotic ribosomal subunit. During the assembly of the SSU processome in the nucleolus, many ribosome biogenesis factors, an RNA chaperone and ribosomal proteins associate with the nascent pre-rRNA and work in concert to generate RNA folding, modifications, rearrangements and cleavage as well as targeted degradation of pre-ribosomal RNA by the RNA exosome. This chain is Small ribosomal subunit protein uS4 (rps-9), found in Caenorhabditis elegans.